Consider the following 241-residue polypeptide: Adenosylcobinamide-GDP ribazoletransferase (241 aa).

The next 7 membrane-spanning stretches (helical) occupy residues 34–54 (RIPA…FTGS), 55–75 (FLSL…GFYL), 109–129 (VGPF…ELIT), 133–153 (PVAF…VLVF), 165–185 (MLFP…LPLL), 186–206 (LIDV…GFLI), and 221–241 (VLGG…NYLI).

Belongs to the CobS family. Mg(2+) serves as cofactor.

The protein resides in the cell inner membrane. It catalyses the reaction alpha-ribazole + adenosylcob(III)inamide-GDP = adenosylcob(III)alamin + GMP + H(+). The catalysed reaction is alpha-ribazole 5'-phosphate + adenosylcob(III)inamide-GDP = adenosylcob(III)alamin 5'-phosphate + GMP + H(+). It functions in the pathway cofactor biosynthesis; adenosylcobalamin biosynthesis; adenosylcobalamin from cob(II)yrinate a,c-diamide: step 7/7. Functionally, joins adenosylcobinamide-GDP and alpha-ribazole to generate adenosylcobalamin (Ado-cobalamin). Also synthesizes adenosylcobalamin 5'-phosphate from adenosylcobinamide-GDP and alpha-ribazole 5'-phosphate. The polypeptide is Adenosylcobinamide-GDP ribazoletransferase (Fervidobacterium nodosum (strain ATCC 35602 / DSM 5306 / Rt17-B1)).